Reading from the N-terminus, the 185-residue chain is Lipid A acyltransferase PagP (185 aa).

Residues M1–G14 form the signal peptide. C15 is lipidated: N-palmitoyl cysteine. Residue C15 is the site of S-diacylglycerol cysteine attachment. Active-site residues include H57, D100, and S101.

Belongs to the lipid A palmitoyltransferase family. Homodimer.

It is found in the cell outer membrane. It carries out the reaction a lipid A + a 1,2-diacyl-sn-glycero-3-phosphocholine = a hepta-acyl lipid A + a 2-acyl-sn-glycero-3-phosphocholine. The enzyme catalyses a lipid IVA + a 1,2-diacyl-sn-glycero-3-phosphocholine = a lipid IVB + a 2-acyl-sn-glycero-3-phosphocholine. The catalysed reaction is a lipid IIA + a 1,2-diacyl-sn-glycero-3-phosphocholine = a lipid IIB + a 2-acyl-sn-glycero-3-phosphocholine. Transfers a fatty acid residue from the sn-1 position of a phospholipid to the N-linked hydroxyfatty acid chain on the proximal unit of lipid A or its precursors. The protein is Lipid A acyltransferase PagP of Erwinia sp. (strain Ejp617).